Reading from the N-terminus, the 372-residue chain is N-methyl-L-tryptophan oxidase (372 aa).

4–34 (DLIIIGSGSVGAAAGYYATRAGLNVLMTDAH) contributes to the FAD binding site. The residue at position 308 (Cys-308) is an S-8alpha-FAD cysteine.

This sequence belongs to the MSOX/MTOX family. MTOX subfamily. Monomer. FAD serves as cofactor.

The catalysed reaction is N(alpha)-methyl-L-tryptophan + O2 + H2O = L-tryptophan + formaldehyde + H2O2. Its function is as follows. Catalyzes the oxidative demethylation of N-methyl-L-tryptophan. The chain is N-methyl-L-tryptophan oxidase from Escherichia coli (strain SMS-3-5 / SECEC).